The primary structure comprises 398 residues: Bifunctional enzyme IspD/IspF (398 aa).

The 2-C-methyl-D-erythritol 4-phosphate cytidylyltransferase stretch occupies residues 1 to 234; sequence MTNSPRTAAI…SRLMAALGDI (234 aa). The interval 235–398 is 2-C-methyl-D-erythritol 2,4-cyclodiphosphate synthase; sequence RTGTGYDVHA…LPWGADGLAG (164 aa). The a divalent metal cation site is built by aspartate 241 and histidine 243. Residues 241–243 and 267–268 each bind 4-CDP-2-C-methyl-D-erythritol 2-phosphate; these read DVH and HS. A divalent metal cation is bound at residue histidine 275. Residues 289-291, 365-368, phenylalanine 372, and arginine 375 each bind 4-CDP-2-C-methyl-D-erythritol 2-phosphate; these read DIG and TTSE.

It in the N-terminal section; belongs to the IspD/TarI cytidylyltransferase family. IspD subfamily. In the C-terminal section; belongs to the IspF family. The cofactor is a divalent metal cation.

It catalyses the reaction 2-C-methyl-D-erythritol 4-phosphate + CTP + H(+) = 4-CDP-2-C-methyl-D-erythritol + diphosphate. It carries out the reaction 4-CDP-2-C-methyl-D-erythritol 2-phosphate = 2-C-methyl-D-erythritol 2,4-cyclic diphosphate + CMP. It functions in the pathway isoprenoid biosynthesis; isopentenyl diphosphate biosynthesis via DXP pathway; isopentenyl diphosphate from 1-deoxy-D-xylulose 5-phosphate: step 2/6. It participates in isoprenoid biosynthesis; isopentenyl diphosphate biosynthesis via DXP pathway; isopentenyl diphosphate from 1-deoxy-D-xylulose 5-phosphate: step 4/6. In terms of biological role, bifunctional enzyme that catalyzes the formation of 4-diphosphocytidyl-2-C-methyl-D-erythritol from CTP and 2-C-methyl-D-erythritol 4-phosphate (MEP) (IspD), and catalyzes the conversion of 4-diphosphocytidyl-2-C-methyl-D-erythritol 2-phosphate (CDP-ME2P) to 2-C-methyl-D-erythritol 2,4-cyclodiphosphate (ME-CPP) with a corresponding release of cytidine 5-monophosphate (CMP) (IspF). The chain is Bifunctional enzyme IspD/IspF from Rhodopseudomonas palustris (strain ATCC BAA-98 / CGA009).